The chain runs to 869 residues: Aminopeptidase N (869 aa).

Substrate contacts are provided by residues Glu122 and 262–266 (GAMEN). Position 298 (His298) interacts with Zn(2+). Residue Glu299 is the Proton acceptor of the active site. 2 residues coordinate Zn(2+): His302 and Glu321.

The protein belongs to the peptidase M1 family. Zn(2+) serves as cofactor.

The protein resides in the cell inner membrane. It carries out the reaction Release of an N-terminal amino acid, Xaa-|-Yaa- from a peptide, amide or arylamide. Xaa is preferably Ala, but may be most amino acids including Pro (slow action). When a terminal hydrophobic residue is followed by a prolyl residue, the two may be released as an intact Xaa-Pro dipeptide.. Aminopeptidase N is involved in the degradation of intracellular peptides generated by protein breakdown during normal growth as well as in response to nutrient starvation. This is Aminopeptidase N (pepN) from Haemophilus influenzae (strain ATCC 51907 / DSM 11121 / KW20 / Rd).